The primary structure comprises 261 residues: Type III pantothenate kinase (261 aa).

Position 6-13 (6-13 (DAGNTNVV)) interacts with ATP. A substrate-binding site is contributed by 108 to 111 (GADR). The Proton acceptor role is filled by aspartate 110. Aspartate 130 contacts K(+). Threonine 133 lines the ATP pocket. Residue threonine 185 coordinates substrate.

This sequence belongs to the type III pantothenate kinase family. Homodimer. NH4(+) serves as cofactor. The cofactor is K(+).

The protein localises to the cytoplasm. It carries out the reaction (R)-pantothenate + ATP = (R)-4'-phosphopantothenate + ADP + H(+). It functions in the pathway cofactor biosynthesis; coenzyme A biosynthesis; CoA from (R)-pantothenate: step 1/5. Catalyzes the phosphorylation of pantothenate (Pan), the first step in CoA biosynthesis. The polypeptide is Type III pantothenate kinase (Rhodospirillum centenum (strain ATCC 51521 / SW)).